The following is a 578-amino-acid chain: MAAAMPLALLVLLLLGPGGWCLAEPPRDSLREELVITPLPSGDVAATFQFRTRWDSELQREGVSHYRLFPKALGQLISKYSLRELHLSFTQGFWRTRYWGPPFLQAPSGAELWVWFQDTVTDVDKSWKELSNVLSGIFCASLNFIDSTNTVTPTASFKPLGLANDTDHYFLRYAVLPREVVCTENLTPWKKLLPCSSKAGLSVLLKADRLFHTSYHSQAVHIRPVCRNARCTSISWELRQTLSVVFDAFITGQGKKDWSLFRMFSRTLTEPCPLASESRVYVDITTYNQDNETLEVHPPPTTTYQDVILGTRKTYAIYDLLDTAMINNSRNLNIQLKWKRPPENEAPPVPFLHAQRYVSGYGLQKGELSTLLYNTHPYRAFPVLLLDTVPWYLRLYVHTLTITSKGKENKPSYIHYQPAQDRLQPHLLEMLIQLPANSVTKVSIQFERALLKWTEYTPDPNHGFYVSPSVLSALVPSMVAAKPVDWEESPLFNSLFPVSDGSNYFVRLYTEPLLVNLPTPDFSMPYNVICLTCTVVAVCYGSFYNLLTRTFHIEEPRTGGLAKRLANLIRRARGVPPL.

Residues 1-21 form the signal peptide; the sequence is MAAAMPLALLVLLLLGPGGWC. Topologically, residues 22-525 are lumenal; sequence LAEPPRDSLR…NLPTPDFSMP (504 aa). N-linked (GlcNAc...) asparagine glycosylation occurs at Asn164. 2 disulfides stabilise this stretch: Cys195/Cys272 and Cys226/Cys231. N-linked (GlcNAc...) asparagine glycosylation is found at Asn291 and Asn327. The a 2-acyl-6-[6-phosphoethanolamine-alpha-D-mannosyl-(1-&gt;2)-6-phosphoethanolamine-alpha-D-mannosyl-(1-&gt;6)-2-phosphoethanolamine-alpha-D-mannosyl-(1-&gt;4)-alpha-D-glucosaminyl]-1-(1-radyl,2-acyl-sn-glycero-3-phospho)-1D-myo-inositol site is built by Asn461, Asp521, Ser523, and Asn527. The chain crosses the membrane as a helical span at residues 526-548; the sequence is YNVICLTCTVVAVCYGSFYNLLT. Residues 549–578 are Cytoplasmic-facing; that stretch reads RTFHIEEPRTGGLAKRLANLIRRARGVPPL.

The protein belongs to the PIGT family. In terms of assembly, heteropentamer. Part of the GPI-anchor transamidase complex, consisting of PIGK, PIGT, PIGS, PIGU and GAA1. In terms of processing, the disulfide bond between PIGK/GPI8 and PIGT is important for normal enzyme activity.

The protein resides in the endoplasmic reticulum membrane. Its pathway is glycolipid biosynthesis; glycosylphosphatidylinositol-anchor biosynthesis. Component of the glycosylphosphatidylinositol-anchor (GPI-anchor) transamidase (GPI-T) complex that catalyzes the formation of the linkage between a proprotein and a GPI-anchor and participates in GPI anchored protein biosynthesis. May play a crucial role in GPI-T complex assembly in the luminal layer. Binds GPI-anchor. The polypeptide is GPI-anchor transamidase component PIGT (Homo sapiens (Human)).